The chain runs to 328 residues: NADH-quinone oxidoreductase subunit H 1 (328 aa).

Transmembrane regions (helical) follow at residues 11–31 (VVKA…FLLF), 81–101 (LAPV…PWAP), 116–136 (VLVI…GGWA), 154–174 (ISYE…TGSV), 189–209 (LFPQ…EAGW), 235–257 (GLFF…TFFL), 269–289 (IPGF…LYWI), and 308–328 (VLLP…ALWA).

It belongs to the complex I subunit 1 family. In terms of assembly, NDH-1 is composed of 14 different subunits. Subunits NuoA, H, J, K, L, M, N constitute the membrane sector of the complex.

It localises to the cell membrane. It carries out the reaction a quinone + NADH + 5 H(+)(in) = a quinol + NAD(+) + 4 H(+)(out). In terms of biological role, NDH-1 shuttles electrons from NADH, via FMN and iron-sulfur (Fe-S) centers, to quinones in the respiratory chain. The immediate electron acceptor for the enzyme in this species is believed to be ubiquinone. Couples the redox reaction to proton translocation (for every two electrons transferred, four hydrogen ions are translocated across the cytoplasmic membrane), and thus conserves the redox energy in a proton gradient. This subunit may bind ubiquinone. The chain is NADH-quinone oxidoreductase subunit H 1 from Symbiobacterium thermophilum (strain DSM 24528 / JCM 14929 / IAM 14863 / T).